The following is an 80-amino-acid chain: uncharacterized protein (80 aa).

It belongs to the BolA/IbaG family.

This is an uncharacterized protein from Buchnera aphidicola subsp. Acyrthosiphon pisum (strain APS) (Acyrthosiphon pisum symbiotic bacterium).